A 195-amino-acid chain; its full sequence is Peptidyl-tRNA hydrolase (195 aa).

Tyr-17 is a tRNA binding site. Residue His-22 is the Proton acceptor of the active site. TRNA contacts are provided by Tyr-68, Asn-70, and Asn-116.

The protein belongs to the PTH family. In terms of assembly, monomer.

It is found in the cytoplasm. It catalyses the reaction an N-acyl-L-alpha-aminoacyl-tRNA + H2O = an N-acyl-L-amino acid + a tRNA + H(+). In terms of biological role, hydrolyzes ribosome-free peptidyl-tRNAs (with 1 or more amino acids incorporated), which drop off the ribosome during protein synthesis, or as a result of ribosome stalling. Catalyzes the release of premature peptidyl moieties from peptidyl-tRNA molecules trapped in stalled 50S ribosomal subunits, and thus maintains levels of free tRNAs and 50S ribosomes. This Shewanella frigidimarina (strain NCIMB 400) protein is Peptidyl-tRNA hydrolase.